Reading from the N-terminus, the 176-residue chain is Vitamin K epoxide reductase complex subunit 1-like protein 1 (176 aa).

At 1–13 (MAAPVLLRVSVPR) the chain is on the cytoplasmic side. The chain crosses the membrane as a helical span at residues 14–36 (WERVARYAVCAAGILLSIYAYHV). The Lumenal segment spans residues 37 to 87 (EREKERDPEHRALCDLGPWVKCSAALASRWGRGFGLLGSIFGKDGVLNQPN). Cysteine 50 and cysteine 58 form a disulfide bridge. Asparagine 87 contacts (S)-warfarin. Residues 88 to 102 (SVFGLIFYILQLLLG) form a helical membrane-spanning segment. Topologically, residues 103–107 (MTASA) are cytoplasmic. Residues 108 to 135 (VAALVLMTSSIVSVVGSLYLAYILYFVL) traverse the membrane as a helical segment. At 136–138 (KEF) the chain is on the lumenal side. Cysteines 139 and 142 form a disulfide. Residues 139–160 (CIICVTTYVLNFLLLIINYKRL) form a helical membrane-spanning segment. Positions 142 and 146 each coordinate phylloquinone. Tyrosine 146 lines the (S)-warfarin pocket. The Cytoplasmic portion of the chain corresponds to 161 to 176 (VYLNEAWKRQLQPKED).

Belongs to the VKOR family. In terms of tissue distribution, detected in testis and lung.

The protein resides in the endoplasmic reticulum membrane. The enzyme catalyses phylloquinone + [protein]-disulfide + H2O = 2,3-epoxyphylloquinone + [protein]-dithiol. It catalyses the reaction phylloquinol + [protein]-disulfide = phylloquinone + [protein]-dithiol. Its activity is regulated as follows. Inhibited by warfarin (coumadin). Warfarin locks VKORC1 in both redox states into the closed conformation. In terms of biological role, involved in vitamin K metabolism. Can reduce inactive vitamin K 2,3-epoxide to active vitamin K, and may contribute to vitamin K-mediated protection against oxidative stress. Plays a role in vitamin K-dependent gamma-carboxylation of Glu residues in target proteins. The chain is Vitamin K epoxide reductase complex subunit 1-like protein 1 (Vkorc1l1) from Mus musculus (Mouse).